The primary structure comprises 428 residues: Immunoglobulin superfamily member 11 (428 aa).

An N-terminal signal peptide occupies residues 1 to 22 (MTRRRSAPASWLLVSLLGVATS). The 114-residue stretch at 23–136 (LEVSESPGSV…DRGGRNIGVT (114 aa)) folds into the Ig-like V-type domain. The Extracellular segment spans residues 23 to 240 (LEVSESPGSV…QVISPQPRSV (218 aa)). Intrachain disulfides connect C44–C120 and C165–C215. Residue N102 is glycosylated (N-linked (GlcNAc...) asparagine). An Ig-like C2-type domain is found at 144–234 (PSAPQCQIQG…TCLLDLQVIS (91 aa)). A helical transmembrane segment spans residues 241–261 (GVIAGAVGTGAVLIVICLALI). Residues 262-428 (SGAFFYWRSK…PAQSRAGSLV (167 aa)) lie on the Cytoplasmic side of the membrane. An Omega-N-methylarginine modification is found at R375. The span at 376–389 (GSSPQVLPRNNGSV) shows a compositional bias: polar residues. Residues 376–396 (GSSPQVLPRNNGSVSRKPWPQ) are disordered.

Post-translationally, N-glycosylated. As to expression, highly expressed in testis and detected in kidney and adrenal gland. In brain, expressed in commissure fibers of the corpus callosum and pyramidal cell layers of the dentate gyrus and hippocampus where it is probably expressed by both neurons and glial cells.

The protein resides in the cell membrane. Its function is as follows. Functions as a cell adhesion molecule through homophilic interaction. Stimulates cell growth. This is Immunoglobulin superfamily member 11 (Igsf11) from Mus musculus (Mouse).